The following is a 260-amino-acid chain: MIIVLSPAKSLDYETPPHVRKHTIPDFVDDAAELIGGLRRLSPQQIASLMDISDQLAHLNFQRYAEWSPKFGTHNAKQAVLAFNGDVYEGFNAKTLSSADLDYAQNHVRVLSGLYGLLRPLDLLQPYRLEMGTRFANPRGKDLYAFWGERITQALNAQLKKNAVASRVLVNCASGEYFKSVKPKLLEAPIITPVFEDWKGGRYKIISFHAKRARGLMARYAVENRIDRPEQLKDFDADGYAFDAEASNDSTYVFRRRVVE.

This sequence belongs to the UPF0246 family.

This chain is UPF0246 protein Bphyt_1375, found in Paraburkholderia phytofirmans (strain DSM 17436 / LMG 22146 / PsJN) (Burkholderia phytofirmans).